Consider the following 41-residue polypeptide: Large ribosomal subunit protein bL36 (41 aa).

It belongs to the bacterial ribosomal protein bL36 family.

The polypeptide is Large ribosomal subunit protein bL36 (Bradyrhizobium diazoefficiens (strain JCM 10833 / BCRC 13528 / IAM 13628 / NBRC 14792 / USDA 110)).